The sequence spans 776 residues: Calcium-independent phospholipase A2-gamma (776 aa).

Asparagine 4 and asparagine 157 each carry an N-linked (GlcNAc...) asparagine glycan. Disordered stretches follow at residues 216 to 276 and 306 to 334; these read KGKM…HPVS and KLKSDPKSPPEEQEVSAKTEQAVNKDKKA. 2 stretches are compositionally biased toward basic and acidic residues: residues 221 to 239 and 247 to 263; these read QTKEDKQLQDKPDLEERKS and VADRPDSESPLEVKDKL. Residues 439 to 634 enclose the PNPLA domain; it reads LTIDGGGTRG…LLNNPSALAL (196 aa). The GXGXXG signature appears at 443-448; sequence GGGTRG. The chain crosses the membrane as a helical span at residues 469 to 489; it reads LFDYICGVSTGAILAFMLGLF. The GXSXG signature appears at 475–479; the sequence is GVSTG. The active-site Nucleophile is the serine 477. The Proton acceptor role is filled by aspartate 621. A DGA/G motif is present at residues 621–623; that stretch reads DGG. The residue at position 730 (lysine 730) is an N6-succinyllysine.

In terms of tissue distribution, expressed in myocardium (at protein level).

The protein resides in the endoplasmic reticulum membrane. The protein localises to the mitochondrion membrane. It localises to the peroxisome membrane. It catalyses the reaction a 1,2-diacyl-sn-glycero-3-phosphocholine + H2O = a 1-acyl-sn-glycero-3-phosphocholine + a fatty acid + H(+). The catalysed reaction is a 1,2-diacyl-sn-glycero-3-phosphocholine + H2O = a 2-acyl-sn-glycero-3-phosphocholine + a fatty acid + H(+). The enzyme catalyses a 1,2-diacyl-sn-glycero-3-phosphoethanolamine + H2O = a 1-acyl-sn-glycero-3-phosphoethanolamine + a fatty acid + H(+). It carries out the reaction a 1-O-(1Z-alkenyl)-2-acyl-sn-glycero-3-phosphocholine + H2O = a 1-O-(1Z-alkenyl)-sn-glycero-3-phosphocholine + a fatty acid + H(+). It catalyses the reaction a 1-acyl-sn-glycero-3-phosphocholine + H2O = sn-glycerol 3-phosphocholine + a fatty acid + H(+). The catalysed reaction is 1-hexadecanoyl-2-(5Z,8Z,11Z,14Z-eicosatetraenoyl)-sn-glycero-3-phosphocholine + H2O = 2-(5Z,8Z,11Z,14Z)-eicosatetraenoyl-sn-glycero-3-phosphocholine + hexadecanoate + H(+). The enzyme catalyses 1-acyl-2-(9Z,12Z)-octadecadienoyl-sn-glycero-3-phosphocholine + H2O = a 1-acyl-sn-glycero-3-phosphocholine + (9Z,12Z)-octadecadienoate + H(+). It carries out the reaction 1-acyl-2-(5Z,8Z,11Z,14Z-eicosatetraenoyl)-sn-glycero-3-phosphocholine + H2O = a 1-acyl-sn-glycero-3-phosphocholine + (5Z,8Z,11Z,14Z)-eicosatetraenoate + H(+). It catalyses the reaction 1-hexadecanoyl-2-(5Z,8Z,11Z,14Z-eicosatetraenoyl)-sn-glycero-3-phosphocholine + H2O = 1-hexadecanoyl-sn-glycero-3-phosphocholine + (5Z,8Z,11Z,14Z)-eicosatetraenoate + H(+). The catalysed reaction is 1-octadecanoyl-2-(9Z-octadecenoyl)-sn-glycero-3-phosphocholine + H2O = 1-octadecanoyl-sn-glycero-3-phosphocholine + (9Z)-octadecenoate + H(+). The enzyme catalyses 1-hexadecanoyl-2-(9Z-octadecenoyl)-sn-glycero-3-phosphocholine + H2O = 1-hexadecanoyl-sn-glycero-3-phosphocholine + (9Z)-octadecenoate + H(+). It carries out the reaction 1-hexadecanoyl-2-(9Z,12Z-octadecadienoyl)-sn-glycero-3-phosphocholine + H2O = (9Z,12Z)-octadecadienoate + 1-hexadecanoyl-sn-glycero-3-phosphocholine + H(+). It catalyses the reaction 1-acyl-2-(9Z,12Z)-octadecadienoyl-sn-glycero-3-phosphoethanolamine + H2O = a 1-acyl-sn-glycero-3-phosphoethanolamine + (9Z,12Z)-octadecadienoate + H(+). The catalysed reaction is 1-acyl-2-(5Z,8Z,11Z,14Z)-eicosatetraenoyl-sn-glycero-3-phosphoethanolamine + H2O = a 1-acyl-sn-glycero-3-phosphoethanolamine + (5Z,8Z,11Z,14Z)-eicosatetraenoate + H(+). The enzyme catalyses 1-hexadecanoyl-2-(5Z,8Z,11Z,14Z-eicosatetraenoyl)-sn-glycero-3-phosphoethanolamine + H2O = 1-hexadecanoyl-sn-glycero-3-phosphoethanolamine + (5Z,8Z,11Z,14Z)-eicosatetraenoate + H(+). It carries out the reaction 1-octadecanoyl-2-(9Z-octadecenoyl)-sn-glycero-3-phosphocholine + H2O = 2-(9Z-octadecenoyl)-sn-glycero-3-phosphocholine + octadecanoate + H(+). It catalyses the reaction 1-hexadecanoyl-2-(4Z,7Z,10Z,13Z,16Z,19Z-docosahexaenoyl)-sn-glycero-3-phosphocholine + H2O = 2-(4Z,7Z,10Z,13Z,16Z,19Z-docosahexaenoyl)-sn-glycero-3-phosphocholine + hexadecanoate + H(+). The catalysed reaction is 1-O-(1Z)-hexadecenyl-2 (5Z,8Z,11Z,14Z)-eicosatetraenoyl-sn-glycero-3-phosphocholine + H2O = 1-(1Z-hexadecenyl)-sn-glycero-3-phosphocholine + (5Z,8Z,11Z,14Z)-eicosatetraenoate + H(+). The enzyme catalyses 1-O-(1Z-hexadecenyl)-2-(9Z-octadecenoyl)-sn-glycero-3-phosphocholine + H2O = 1-(1Z-hexadecenyl)-sn-glycero-3-phosphocholine + (9Z)-octadecenoate + H(+). It carries out the reaction 1-hexadecanoyl-sn-glycero-3-phosphocholine + H2O = sn-glycerol 3-phosphocholine + hexadecanoate + H(+). It catalyses the reaction 1',3'-bis-[1,2-di-(9Z,12Z-octadecadienoyl)-sn-glycero-3-phospho]-glycerol + H2O = 1'-[1,2-di-(9Z,12Z-octadecadienoyl)-sn-glycero-3-phospho]-3'-[1-(9Z,12Z-octadecadienoyl)-sn-glycero-3-phospho]-glycerol + (9Z,12Z)-octadecadienoate + H(+). The catalysed reaction is 1'-[1-acyl-2-(9-hydroxy-(10E,12Z)-octadecadienoyl)-sn-glycero-3-phospho]-3'-[1,2-diacyl-sn-glycero-3-phospho]-glycerol + H2O = 9-hydroxy-(10E,12Z)-octadecadienoate + 1'-[1,2-diacyl-sn-glycero-3-phospho],3'-[1-acyl-sn-glycero-3-phospho]-glycerol + H(+). It functions in the pathway phospholipid metabolism. Calcium-independent phospholipase. Its function is as follows. Calcium-independent and membrane-bound phospholipase, that catalyzes the esterolytic cleavage of fatty acids from glycerophospholipids to yield free fatty acids and lysophospholipids, hence regulating membrane physical properties and the release of lipid second messengers and growth factors. Hydrolyzes phosphatidylethanolamine, phosphatidylcholine and probably phosphatidylinositol with a possible preference for the former. Also has a broad substrate specificity in terms of fatty acid moieties, hydrolyzing saturated and mono-unsaturated fatty acids at nearly equal rates from either the sn-1 or sn-2 position in diacyl phosphatidylcholine. However, has a weak activity toward polyunsaturated fatty acids at the sn-2 position, and thereby favors the production of 2-arachidonoyl lysophosphatidylcholine, a key branch point metabolite in eicosanoid signaling. On the other hand, can produce arachidonic acid from the sn-1 position of diacyl phospholipid and from the sn-2 position of arachidonate-containing plasmalogen substrates. Therefore, plays an important role in the mobilization of arachidonic acid in response to cellular stimuli and the generation of lipid second messengers. Can also hydrolyze lysophosphatidylcholine. In the mitochondrial compartment, catalyzes the hydrolysis and release of oxidized aliphatic chains from cardiolipin and integrates mitochondrial bioenergetics and signaling. It is essential for maintaining efficient bioenergetic mitochondrial function through tailoring mitochondrial membrane lipid metabolism and composition. This chain is Calcium-independent phospholipase A2-gamma, found in Mus musculus (Mouse).